Consider the following 75-residue polypeptide: uncharacterized protein (75 aa).

Positions 19–38 (FHNTAPSKTNVNVPRANKSQ) are enriched in polar residues. Residues 19-42 (FHNTAPSKTNVNVPRANKSQSKGK) form a disordered region. The chain crosses the membrane as a helical span at residues 47–66 (LLVLVGTLALVTSVISVNYQ).

It localises to the membrane. This is an uncharacterized protein from Saccharomyces cerevisiae (strain ATCC 204508 / S288c) (Baker's yeast).